The chain runs to 51 residues: Defensin-like protein 1 (51 aa).

Position 1 is a pyrrolidone carboxylic acid (glutamine 1). 4 disulfide bridges follow: cysteine 4-cysteine 51, cysteine 15-cysteine 36, cysteine 21-cysteine 45, and cysteine 25-cysteine 47.

In terms of assembly, forms oligomers in its native state.

In terms of biological role, possesses antifungal activity sensitive to inorganic cations. The protein is Defensin-like protein 1 of Sinapis alba (White mustard).